The chain runs to 308 residues: Elongation factor Ts (308 aa).

Residues 80–83 (TDFV) form an involved in Mg(2+) ion dislocation from EF-Tu region.

This sequence belongs to the EF-Ts family.

Its subcellular location is the cytoplasm. Associates with the EF-Tu.GDP complex and induces the exchange of GDP to GTP. It remains bound to the aminoacyl-tRNA.EF-Tu.GTP complex up to the GTP hydrolysis stage on the ribosome. The chain is Elongation factor Ts from Rhizobium etli (strain CIAT 652).